The primary structure comprises 1071 residues: Carbamoyl phosphate synthase large chain (1071 aa).

Residues 1–403 (MPKRTDLKSI…SFQKALRGLE (403 aa)) form a carboxyphosphate synthetic domain region. Arginine 129, arginine 169, glycine 175, glycine 176, glutamine 208, valine 210, glutamate 215, glycine 241, valine 242, histidine 243, glutamine 285, and glutamate 299 together coordinate ATP. An ATP-grasp 1 domain is found at 133–328 (KEAMEKIGLS…IAKVAAKLAV (196 aa)). Glutamine 285, glutamate 299, and asparagine 301 together coordinate Mg(2+). Mn(2+)-binding residues include glutamine 285, glutamate 299, and asparagine 301. The tract at residues 404-548 (TGLCGFNPRS…YSTYEEECES (145 aa)) is oligomerization domain. The segment at 549–930 (RPSDRKKVMI…AYYKAQLGAG (382 aa)) is carbamoyl phosphate synthetic domain. In terms of domain architecture, ATP-grasp 2 spans 673 to 864 (QKVLNDLGLR…LAKVGARCMA (192 aa)). ATP contacts are provided by arginine 709, phenylalanine 748, leucine 750, glutamate 755, glycine 780, isoleucine 781, histidine 782, serine 783, glutamine 823, and glutamate 835. Mg(2+)-binding residues include glutamine 823, glutamate 835, and asparagine 837. Residues glutamine 823, glutamate 835, and asparagine 837 each coordinate Mn(2+). The 141-residue stretch at 931–1071 (ERLNPTGKIF…ELHGRLKNRN (141 aa)) folds into the MGS-like domain. The allosteric domain stretch occupies residues 931 to 1071 (ERLNPTGKIF…ELHGRLKNRN (141 aa)).

This sequence belongs to the CarB family. In terms of assembly, composed of two chains; the small (or glutamine) chain promotes the hydrolysis of glutamine to ammonia, which is used by the large (or ammonia) chain to synthesize carbamoyl phosphate. Tetramer of heterodimers (alpha,beta)4. It depends on Mg(2+) as a cofactor. Requires Mn(2+) as cofactor.

The enzyme catalyses hydrogencarbonate + L-glutamine + 2 ATP + H2O = carbamoyl phosphate + L-glutamate + 2 ADP + phosphate + 2 H(+). It carries out the reaction hydrogencarbonate + NH4(+) + 2 ATP = carbamoyl phosphate + 2 ADP + phosphate + 2 H(+). Its pathway is amino-acid biosynthesis; L-arginine biosynthesis; carbamoyl phosphate from bicarbonate: step 1/1. The protein operates within pyrimidine metabolism; UMP biosynthesis via de novo pathway; (S)-dihydroorotate from bicarbonate: step 1/3. In terms of biological role, large subunit of the glutamine-dependent carbamoyl phosphate synthetase (CPSase). CPSase catalyzes the formation of carbamoyl phosphate from the ammonia moiety of glutamine, carbonate, and phosphate donated by ATP, constituting the first step of 2 biosynthetic pathways, one leading to arginine and/or urea and the other to pyrimidine nucleotides. The large subunit (synthetase) binds the substrates ammonia (free or transferred from glutamine from the small subunit), hydrogencarbonate and ATP and carries out an ATP-coupled ligase reaction, activating hydrogencarbonate by forming carboxy phosphate which reacts with ammonia to form carbamoyl phosphate. The polypeptide is Carbamoyl phosphate synthase large chain (Neisseria meningitidis serogroup B (strain ATCC BAA-335 / MC58)).